The chain runs to 136 residues: Sec-independent protein translocase protein TatB (136 aa).

Residues 2–22 form a helical membrane-spanning segment; the sequence is FGSVGWGELLVLLIVGLVVLG. Positions 107-136 are disordered; the sequence is VTEPAPTPIVNPELAKPAEPGPTRYDADAT.

The protein belongs to the TatB family. The Tat system comprises two distinct complexes: a TatABC complex, containing multiple copies of TatA, TatB and TatC subunits, and a separate TatA complex, containing only TatA subunits. Substrates initially bind to the TatABC complex, which probably triggers association of the separate TatA complex to form the active translocon.

It localises to the cell membrane. Part of the twin-arginine translocation (Tat) system that transports large folded proteins containing a characteristic twin-arginine motif in their signal peptide across membranes. Together with TatC, TatB is part of a receptor directly interacting with Tat signal peptides. TatB may form an oligomeric binding site that transiently accommodates folded Tat precursor proteins before their translocation. The chain is Sec-independent protein translocase protein TatB from Mycobacteroides abscessus (strain ATCC 19977 / DSM 44196 / CCUG 20993 / CIP 104536 / JCM 13569 / NCTC 13031 / TMC 1543 / L948) (Mycobacterium abscessus).